A 174-amino-acid polypeptide reads, in one-letter code: MSHSKIKAGGHGSSGIGNDFTPAKTPAPATPAPQSQQVNDLLGRGVGNALNKSNLGSDSQTWTPGSTMVSLKSRSSSSHKPDTGGDTKPDSTSGGKRKRDDETDPNAETEGGKKKKKRDDENDSSQAGGAGSSAGSSGSPEDALMNIALQRAIQRQTQTRQKMQEAMKIKDDDD.

Residues 1–174 (MSHSKIKAGG…EAMKIKDDDD (174 aa)) are disordered. Residues 50-65 (LNKSNLGSDSQTWTPG) are compositionally biased toward polar residues. The segment covering 66–78 (STMVSLKSRSSSS) has biased composition (low complexity). The segment covering 79–89 (HKPDTGGDTKP) has biased composition (basic and acidic residues). Residues 147–161 (IALQRAIQRQTQTRQ) are compositionally biased toward low complexity. Positions 162 to 174 (KMQEAMKIKDDDD) are enriched in basic and acidic residues.

It localises to the secreted. In terms of biological role, probably involved in host-pathogen interactions. The polypeptide is Protein PopB (popB) (Ralstonia nicotianae (strain ATCC BAA-1114 / GMI1000) (Ralstonia solanacearum)).